The following is a 235-amino-acid chain: Leucyl/phenylalanyl-tRNA--protein transferase (235 aa).

The protein belongs to the L/F-transferase family.

The protein localises to the cytoplasm. It carries out the reaction N-terminal L-lysyl-[protein] + L-leucyl-tRNA(Leu) = N-terminal L-leucyl-L-lysyl-[protein] + tRNA(Leu) + H(+). The enzyme catalyses N-terminal L-arginyl-[protein] + L-leucyl-tRNA(Leu) = N-terminal L-leucyl-L-arginyl-[protein] + tRNA(Leu) + H(+). It catalyses the reaction L-phenylalanyl-tRNA(Phe) + an N-terminal L-alpha-aminoacyl-[protein] = an N-terminal L-phenylalanyl-L-alpha-aminoacyl-[protein] + tRNA(Phe). Its function is as follows. Functions in the N-end rule pathway of protein degradation where it conjugates Leu, Phe and, less efficiently, Met from aminoacyl-tRNAs to the N-termini of proteins containing an N-terminal arginine or lysine. The chain is Leucyl/phenylalanyl-tRNA--protein transferase from Aeromonas hydrophila subsp. hydrophila (strain ATCC 7966 / DSM 30187 / BCRC 13018 / CCUG 14551 / JCM 1027 / KCTC 2358 / NCIMB 9240 / NCTC 8049).